Consider the following 158-residue polypeptide: Endoribonuclease YbeY (158 aa).

3 residues coordinate Zn(2+): histidine 124, histidine 128, and histidine 134.

The protein belongs to the endoribonuclease YbeY family. Zn(2+) is required as a cofactor.

The protein resides in the cytoplasm. Single strand-specific metallo-endoribonuclease involved in late-stage 70S ribosome quality control and in maturation of the 3' terminus of the 16S rRNA. This is Endoribonuclease YbeY from Latilactobacillus sakei subsp. sakei (strain 23K) (Lactobacillus sakei subsp. sakei).